The primary structure comprises 388 residues: Succinate--CoA ligase [ADP-forming] subunit beta (388 aa).

The region spanning 9–244 (KDLLSSYDIA…PSQENVRDVL (236 aa)) is the ATP-grasp domain. ATP is bound by residues K46, 53-55 (GRG), V102, and E107. Residues N199 and D213 each coordinate Mg(2+). Substrate contacts are provided by residues N264 and 321-323 (GIM).

This sequence belongs to the succinate/malate CoA ligase beta subunit family. As to quaternary structure, heterotetramer of two alpha and two beta subunits. Mg(2+) is required as a cofactor.

The catalysed reaction is succinate + ATP + CoA = succinyl-CoA + ADP + phosphate. It carries out the reaction GTP + succinate + CoA = succinyl-CoA + GDP + phosphate. Its pathway is carbohydrate metabolism; tricarboxylic acid cycle; succinate from succinyl-CoA (ligase route): step 1/1. In terms of biological role, succinyl-CoA synthetase functions in the citric acid cycle (TCA), coupling the hydrolysis of succinyl-CoA to the synthesis of either ATP or GTP and thus represents the only step of substrate-level phosphorylation in the TCA. The beta subunit provides nucleotide specificity of the enzyme and binds the substrate succinate, while the binding sites for coenzyme A and phosphate are found in the alpha subunit. The sequence is that of Succinate--CoA ligase [ADP-forming] subunit beta from Chlamydia felis (strain Fe/C-56) (Chlamydophila felis).